Reading from the N-terminus, the 199-residue chain is Shikimate kinase (199 aa).

12–17 (GAGKST) contacts ATP. Serine 16 is a binding site for Mg(2+). The substrate site is built by aspartate 34, arginine 58, and glycine 80. Residue arginine 117 participates in ATP binding. Arginine 136 provides a ligand contact to substrate. The tract at residues 174–199 (VSGGDRKSSEAERSGAPLRKSSEVVK) is disordered. The segment covering 177-186 (GDRKSSEAER) has biased composition (basic and acidic residues).

It belongs to the shikimate kinase family. Monomer. It depends on Mg(2+) as a cofactor.

It localises to the cytoplasm. The catalysed reaction is shikimate + ATP = 3-phosphoshikimate + ADP + H(+). The protein operates within metabolic intermediate biosynthesis; chorismate biosynthesis; chorismate from D-erythrose 4-phosphate and phosphoenolpyruvate: step 5/7. Its function is as follows. Catalyzes the specific phosphorylation of the 3-hydroxyl group of shikimic acid using ATP as a cosubstrate. The chain is Shikimate kinase from Mycobacterium leprae (strain TN).